Reading from the N-terminus, the 815-residue chain is MAHTVQTLSKLLKKTPDEVITILANAGVDGKNSDSAISAEERKILMSSLSKRSSSKSSMFSFSKTGIKSSANSASGAKVQVKKKRLTKSATATDEQPEIAVNEVAQAVQVALDAGRDADKKLLAQDAKRLEMVRLQKTQAEVLKAQKKTVKQAQAQEIEKKAEKPKMIDKFKEDKKPKRLRNTLNGNNTRRQLHVARHNPNRKLKKKDRTRLSQKVQEEQAQHAFQKPIEKVVHEIAIAENIKVTELAQKMATKAGEVLKVLMGMGVMATLNDVIDQDTAMLVVEEMGHKSIASVEETVEDVLIEQLKSSGNEKARPPVVTIMGHVDHGKTSLLDYIRQAKVTHGEAGGITQHIGAYQVQSNGNTITFIDTPGHAAFSKMRSRSANATDIVILVVAADDGVMPQTIESIKHVQTAGVPMIVAINKIDKEGIDIDKIKQVLSTHNVISEDWGGDVMMIPVSAYTGEGVDALLDAISLTAEVLEFSAVIKALARGTVLEARLEKGRGKVTTILVQSGTLNKGDIMIAGFEYGKVKQIVDDKGKVLKSATPSMPVEVLGLSGVPNSGDEVLVVDSERKAREVADFRKAKNREAQLQKQQASKMENFLMKMEESNVSTVNVLLKADVRGSAQALIEALEGLSTDEAKVKVVSSGVGGINNTDITLAATSNALVLGFNVRADAVARKTADNEGVRIEYYSIIYNLIDDVKTIMSGLLSPELSENIIGIASVKSVFRSQKMGDIAGCMVEEGVVRRDSLIRVLRDSVVIFEGWLESLRRFKDNVNEVKSGTECGIGVLNYTDIQPGDQIEVFERIERIRTL.

In terms of domain architecture, tr-type G spans 315–482 (ARPPVVTIMG…AISLTAEVLE (168 aa)). The interval 324 to 331 (GHVDHGKT) is G1. Position 324 to 331 (324 to 331 (GHVDHGKT)) interacts with GTP. The interval 349-353 (GITQH) is G2. Residues 370 to 373 (DTPG) are G3. Residues 370-374 (DTPGH) and 424-427 (NKID) contribute to the GTP site. Residues 424–427 (NKID) form a G4 region. A G5 region spans residues 460–462 (SAY).

Belongs to the TRAFAC class translation factor GTPase superfamily. Classic translation factor GTPase family. IF-2 subfamily.

It is found in the cytoplasm. One of the essential components for the initiation of protein synthesis. Protects formylmethionyl-tRNA from spontaneous hydrolysis and promotes its binding to the 30S ribosomal subunits. Also involved in the hydrolysis of GTP during the formation of the 70S ribosomal complex. This Ruthia magnifica subsp. Calyptogena magnifica protein is Translation initiation factor IF-2.